An 84-amino-acid chain; its full sequence is Large ribosomal subunit protein bL27 (84 aa).

The interval 1-21 (MAHKKGGGSTKNGRDSNPKYL) is disordered.

This sequence belongs to the bacterial ribosomal protein bL27 family.

The polypeptide is Large ribosomal subunit protein bL27 (Chlorobium limicola (strain DSM 245 / NBRC 103803 / 6330)).